A 153-amino-acid chain; its full sequence is MAKDVQVMLRQAVPGLGKPGEVVSVRPGYARNYLFPRQMAVRLTPGLLKEQQMRREQEAARKLAEKQQAENYKKALETIGRFVIRKKVGEKDLLFGQVTASDIAEVVLATSGLDIDRRNVLLDEEIKKTGVYLVQVKLHPEVTATLRIQVTPE.

Belongs to the bacterial ribosomal protein bL9 family.

Binds to the 23S rRNA. The sequence is that of Large ribosomal subunit protein bL9 from Synechococcus sp. (strain JA-3-3Ab) (Cyanobacteria bacterium Yellowstone A-Prime).